The sequence spans 277 residues: tRNA U34 carboxymethyltransferase (277 aa).

Carboxy-S-adenosyl-L-methionine is bound by residues Lys-46, Trp-60, Lys-65, Gly-84, 106-108, 133-134, Tyr-153, and Arg-268; these read DPS and VE.

The protein belongs to the class I-like SAM-binding methyltransferase superfamily. CmoB family. As to quaternary structure, homotetramer.

It catalyses the reaction carboxy-S-adenosyl-L-methionine + 5-hydroxyuridine(34) in tRNA = 5-carboxymethoxyuridine(34) in tRNA + S-adenosyl-L-homocysteine + H(+). Its function is as follows. Catalyzes carboxymethyl transfer from carboxy-S-adenosyl-L-methionine (Cx-SAM) to 5-hydroxyuridine (ho5U) to form 5-carboxymethoxyuridine (cmo5U) at position 34 in tRNAs. This is tRNA U34 carboxymethyltransferase from Wolinella succinogenes (strain ATCC 29543 / DSM 1740 / CCUG 13145 / JCM 31913 / LMG 7466 / NCTC 11488 / FDC 602W) (Vibrio succinogenes).